Reading from the N-terminus, the 138-residue chain is MNTIHVDVVSAEESIFTGQARFVALPGEVGELGIYPRHAPLITRIKPGSVRIEMADGSEEFVFVAGGLLEVQPHCVTVLSDTAIRGKDLDDEKANAAKAAAEEALKNAKSDLDLAKAQSELAVMAAQIAALRKFRQKK.

The protein belongs to the ATPase epsilon chain family. In terms of assembly, F-type ATPases have 2 components, CF(1) - the catalytic core - and CF(0) - the membrane proton channel. CF(1) has five subunits: alpha(3), beta(3), gamma(1), delta(1), epsilon(1). CF(0) has three main subunits: a, b and c.

It is found in the cell inner membrane. Produces ATP from ADP in the presence of a proton gradient across the membrane. This chain is ATP synthase epsilon chain, found in Verminephrobacter eiseniae (strain EF01-2).